Here is a 292-residue protein sequence, read N- to C-terminus: 4-hydroxybenzoate octaprenyltransferase (292 aa).

Helical transmembrane passes span 23–43 (PIGI…AGEG), 47–67 (PGVA…GCVI), 98–118 (LILF…MNWL), 141–161 (HLPQ…TFAA), 164–184 (GSIP…ALIY), 211–231 (YDRE…AGIG), 233–253 (YLGL…FSVY), and 270–290 (FLNN…DYLW).

It belongs to the UbiA prenyltransferase family. It depends on Mg(2+) as a cofactor.

Its subcellular location is the cell inner membrane. It carries out the reaction all-trans-octaprenyl diphosphate + 4-hydroxybenzoate = 4-hydroxy-3-(all-trans-octaprenyl)benzoate + diphosphate. The protein operates within cofactor biosynthesis; ubiquinone biosynthesis. Functionally, catalyzes the prenylation of para-hydroxybenzoate (PHB) with an all-trans polyprenyl group. Mediates the second step in the final reaction sequence of ubiquinone-8 (UQ-8) biosynthesis, which is the condensation of the polyisoprenoid side chain with PHB, generating the first membrane-bound Q intermediate 3-octaprenyl-4-hydroxybenzoate. The polypeptide is 4-hydroxybenzoate octaprenyltransferase (Methylococcus capsulatus (strain ATCC 33009 / NCIMB 11132 / Bath)).